A 197-amino-acid chain; its full sequence is Probable thymidylate kinase (197 aa).

Glycine 7 to threonine 14 contributes to the ATP binding site.

This sequence belongs to the thymidylate kinase family.

It carries out the reaction dTMP + ATP = dTDP + ADP. The chain is Probable thymidylate kinase from Halorubrum lacusprofundi (strain ATCC 49239 / DSM 5036 / JCM 8891 / ACAM 34).